A 241-amino-acid polypeptide reads, in one-letter code: Proteasome subunit beta type-1 (241 aa).

M1 is modified (N-acetylmethionine). A propeptide spanning residues 1-28 (MLSSVAAYSGAGRDLAMEPHSSVGPLQL) is cleaved from the precursor. O-linked (GlcNAc) serine glycosylation is present at S58. 2 positions are modified to phosphoserine: S62 and S68. Y150 carries the phosphotyrosine modification. The residue at position 162 (S162) is a Phosphoserine. K204 is subject to N6-acetyllysine. S209 carries O-linked (GlcNAc) serine glycosylation.

Belongs to the peptidase T1B family. The 26S proteasome consists of a 20S proteasome core and two 19S regulatory subunits. The 20S proteasome core is a barrel-shaped complex made of 28 subunits that are arranged in four stacked rings. The two outer rings are each formed by seven alpha subunits, and the two inner rings are formed by seven beta subunits. The proteolytic activity is exerted by three beta-subunits PSMB5, PSMB6 and PSMB7. Interacts with SERPINB2. Interacts with RFPL4A.

The protein localises to the cytoplasm. It localises to the nucleus. Non-catalytic component of the 20S core proteasome complex involved in the proteolytic degradation of most intracellular proteins. This complex plays numerous essential roles within the cell by associating with different regulatory particles. Associated with two 19S regulatory particles, forms the 26S proteasome and thus participates in the ATP-dependent degradation of ubiquitinated proteins. The 26S proteasome plays a key role in the maintenance of protein homeostasis by removing misfolded or damaged proteins that could impair cellular functions, and by removing proteins whose functions are no longer required. Associated with the PA200 or PA28, the 20S proteasome mediates ubiquitin-independent protein degradation. This type of proteolysis is required in several pathways including spermatogenesis (20S-PA200 complex) or generation of a subset of MHC class I-presented antigenic peptides (20S-PA28 complex). The polypeptide is Proteasome subunit beta type-1 (PSMB1) (Bos taurus (Bovine)).